The following is a 609-amino-acid chain: Polyadenylate-binding protein 7 (609 aa).

RRM domains lie at alanine 24–arginine 102, glycine 112–lysine 189, threonine 201–lysine 278, and serine 304–lysine 381. Residues glutamate 509–threonine 586 enclose the PABC domain.

This sequence belongs to the polyadenylate-binding protein type-1 family. In terms of tissue distribution, expressed predominantly in siliques.

The protein localises to the cytoplasm. Its subcellular location is the nucleus. In terms of biological role, binds the poly(A) tail of mRNA. Appears to be an important mediator of the multiple roles of the poly(A) tail in mRNA biogenesis, stability and translation. The chain is Polyadenylate-binding protein 7 (PAB7) from Arabidopsis thaliana (Mouse-ear cress).